Here is a 674-residue protein sequence, read N- to C-terminus: F420-dependent formate dehydrogenase 1 subunit alpha (674 aa).

The 57-residue stretch at 3 to 59 (LDFIHTICPYCGTGCGVDLVVKDGTLVGTNPFKRHPVNEGKTCIKGSYCHEFVHRDD) folds into the 4Fe-4S Mo/W bis-MGD-type domain. [4Fe-4S] cluster is bound by residues cysteine 10, cysteine 13, cysteine 17, and cysteine 45. A non-standard amino acid (selenocysteine) is located at residue selenocysteine 132.

It belongs to the prokaryotic molybdopterin-containing oxidoreductase family. In terms of assembly, dimer of an alpha (FdhA1) and a beta (FdhB1) subunit. [4Fe-4S] cluster is required as a cofactor. The cofactor is Mo-bis(molybdopterin guanine dinucleotide). It depends on Zn(2+) as a cofactor.

The catalysed reaction is oxidized coenzyme F420-(gamma-L-Glu)(n) + formate + 2 H(+) = reduced coenzyme F420-(gamma-L-Glu)(n) + CO2. Functionally, catalyzes the oxidation of formate to carbon dioxide, with coenzyme F420 as the electron acceptor. In vitro can also use methyl viologen as electron acceptor. In Methanococcus maripaludis (strain DSM 14266 / JCM 13030 / NBRC 101832 / S2 / LL), this protein is F420-dependent formate dehydrogenase 1 subunit alpha.